The sequence spans 266 residues: Ribonuclease 3 (266 aa).

One can recognise an RNase III domain in the interval 8 to 130 (LARLTKKLGY…IIGAVYLDSN (123 aa)). Position 43 (Glu-43) interacts with Mg(2+). Asp-47 is an active-site residue. Mg(2+)-binding residues include Asp-116 and Glu-119. Glu-119 is an active-site residue. Positions 157-227 (DPKTRLQEFL…AQQILALIEK (71 aa)) constitute a DRBM domain. The interval 229–266 (REQEKEVKIKPTKQAKLANPRHTKSNPSSSSKKSSTRK) is disordered. Low complexity predominate over residues 253–266 (SNPSSSSKKSSTRK).

It belongs to the ribonuclease III family. As to quaternary structure, homodimer. Mg(2+) serves as cofactor.

It localises to the cytoplasm. The enzyme catalyses Endonucleolytic cleavage to 5'-phosphomonoester.. Digests double-stranded RNA. Involved in the processing of primary rRNA transcript to yield the immediate precursors to the large and small rRNAs (23S and 16S). Processes some mRNAs, and tRNAs when they are encoded in the rRNA operon. Processes pre-crRNA and tracrRNA of type II CRISPR loci if present in the organism. The chain is Ribonuclease 3 from Colwellia psychrerythraea (strain 34H / ATCC BAA-681) (Vibrio psychroerythus).